Reading from the N-terminus, the 427-residue chain is Glucose-1-phosphate adenylyltransferase (427 aa).

Residues Y121, G186, 201–202, and S219 contribute to the alpha-D-glucose 1-phosphate site; that span reads EK.

The protein belongs to the bacterial/plant glucose-1-phosphate adenylyltransferase family. Homotetramer.

The enzyme catalyses alpha-D-glucose 1-phosphate + ATP + H(+) = ADP-alpha-D-glucose + diphosphate. It participates in glycan biosynthesis; glycogen biosynthesis. In terms of biological role, involved in the biosynthesis of ADP-glucose, a building block required for the elongation reactions to produce glycogen. Catalyzes the reaction between ATP and alpha-D-glucose 1-phosphate (G1P) to produce pyrophosphate and ADP-Glc. The sequence is that of Glucose-1-phosphate adenylyltransferase from Corynebacterium diphtheriae (strain ATCC 700971 / NCTC 13129 / Biotype gravis).